A 161-amino-acid polypeptide reads, in one-letter code: NADH-quinone oxidoreductase subunit I (161 aa).

4Fe-4S ferredoxin-type domains follow at residues 52–82 (LRRY…IESS) and 92–121 (TRYD…QGPN). C62, C65, C68, C72, C101, C104, C107, and C111 together coordinate [4Fe-4S] cluster.

It belongs to the complex I 23 kDa subunit family. In terms of assembly, NDH-1 is composed of 14 different subunits. Subunits NuoA, H, J, K, L, M, N constitute the membrane sector of the complex. It depends on [4Fe-4S] cluster as a cofactor.

The protein localises to the cell inner membrane. It carries out the reaction a quinone + NADH + 5 H(+)(in) = a quinol + NAD(+) + 4 H(+)(out). Its function is as follows. NDH-1 shuttles electrons from NADH, via FMN and iron-sulfur (Fe-S) centers, to quinones in the respiratory chain. The immediate electron acceptor for the enzyme in this species is believed to be ubiquinone. Couples the redox reaction to proton translocation (for every two electrons transferred, four hydrogen ions are translocated across the cytoplasmic membrane), and thus conserves the redox energy in a proton gradient. The chain is NADH-quinone oxidoreductase subunit I from Pelagibacter ubique (strain HTCC1062).